The following is a 472-amino-acid chain: MAKTYSAGVKEYRETYWMPNYTPKDTDILACFKITPQAGVPREEAAAAVAAESSTGTWTTVWTDLLTDLDYYKGRAYAIEDVPGDDTCFYAFIAYPIDLFEEGSVVNVFTSLVGNVFGFKAVRALRLEDVRFPIAYVMTCNGPPHGIQVERDIMNKYGRPMLGCTIKPKLGLSAKNYGRAVYECLRGGLDFTKDDENVNSQPFMRWRQRFDFVMDAIDKAERETGERKGHYLNVTAPTPEEMYKRAEYAKEIGAPIIMHDYITGGFCANTGLAQWCRDNGVLLHIHRAMHAVLDRNPHHGIHFRVLTKILRLSGGDHLHTGTVVGKLEGDRASTLGWIDLLRESYIKEDRSRGLFFDQDWGSMPGAFAVASGGIHVWHMPALVTIFGDDSVLQFGGGTLGHPWGNAAGACANRVALEACVEARNQGVAIEKEGKDVLTKAAASSPELKIAMETWKEIKFEFDTVDKLDIAHK.

Substrate-binding residues include Asn115 and Thr165. Lys167 (proton acceptor) is an active-site residue. Position 169 (Lys169) interacts with substrate. Mg(2+)-binding residues include Lys193, Asp195, and Glu196. Lys193 bears the N6-carboxylysine mark. His286 functions as the Proton acceptor in the catalytic mechanism. Arg287, His319, and Ser371 together coordinate substrate.

The protein belongs to the RuBisCO large chain family. Type I subfamily. As to quaternary structure, heterohexadecamer of 8 large chains and 8 small chains. The cofactor is Mg(2+).

It carries out the reaction 2 (2R)-3-phosphoglycerate + 2 H(+) = D-ribulose 1,5-bisphosphate + CO2 + H2O. The catalysed reaction is D-ribulose 1,5-bisphosphate + O2 = 2-phosphoglycolate + (2R)-3-phosphoglycerate + 2 H(+). Functionally, ruBisCO catalyzes two reactions: the carboxylation of D-ribulose 1,5-bisphosphate, the primary event in carbon dioxide fixation, as well as the oxidative fragmentation of the pentose substrate. Both reactions occur simultaneously and in competition at the same active site. This Allochromatium vinosum (strain ATCC 17899 / DSM 180 / NBRC 103801 / NCIMB 10441 / D) (Chromatium vinosum) protein is Ribulose bisphosphate carboxylase large chain 1.